We begin with the raw amino-acid sequence, 335 residues long: Transmembrane protein 120B-A (335 aa).

Residues 1 to 40 (MSLQKCQEEWSEIEKEFQQLQETHKVYKQKLEELNSLQNL) adopt a coiled-coil conformation. Transmembrane regions (helical) follow at residues 100-122 (GLYLNLVLGNVNVTLLSTQAKFA), 130-150 (FKLYLTIILLLGAITCRFVLN), 157-177 (VFNFLLVWYYCTLTIRESILI), 193-213 (VSTFLSGVMLTWPDGLMYQIF), 268-288 (FLLPFLFFGHFWQLYNAITLF), and 300-320 (QVFVLALTFLLLFLGNFLTTL).

This sequence belongs to the TMEM120 family.

Its subcellular location is the nucleus inner membrane. In terms of biological role, necessary for efficient adipogenesis. Does not show ion channel activity. This Xenopus laevis (African clawed frog) protein is Transmembrane protein 120B-A (tmem120b-a).